Reading from the N-terminus, the 257-residue chain is Snake venom serine protease serpentokallikrein-2 (257 aa).

An N-terminal signal peptide occupies residues 1–18; that stretch reads MVLIRVLANLLILQLSYA. The propeptide occupies 19–24; it reads QKSSEL. A Peptidase S1 domain is found at 25–248; sequence VIGGDECNIN…HLDWIKGIIA (224 aa). 6 cysteine pairs are disulfide-bonded: Cys31–Cys162, Cys49–Cys65, Cys97–Cys255, Cys141–Cys209, Cys173–Cys188, and Cys199–Cys224. Catalysis depends on His64, which acts as the Charge relay system. N-linked (GlcNAc...) asparagine glycosylation occurs at Asn102. The active-site Charge relay system is Asp109. The active-site Charge relay system is the Ser203.

It belongs to the peptidase S1 family. Snake venom subfamily. Monomer. Expressed by the venom gland.

It is found in the secreted. Functionally, snake venom serine protease that may act in the hemostasis system of the prey. This chain is Snake venom serine protease serpentokallikrein-2, found in Protobothrops mucrosquamatus (Taiwan habu).